The primary structure comprises 1081 residues: Carbamoyl phosphate synthase large chain (1081 aa).

The interval 1 to 410 (MPKRTDIKTI…SFQKALRGLE (410 aa)) is carboxyphosphate synthetic domain. ATP-binding residues include Arg-129, Arg-176, Gly-182, Gly-183, Glu-215, Leu-217, Glu-222, Gly-248, Ile-249, His-250, Gln-292, and Glu-306. Residues 133-335 (KEAMTKIGLG…IAKVAAKLAV (203 aa)) form the ATP-grasp 1 domain. Residues Gln-292, Glu-306, and Asn-308 each coordinate Mg(2+). Mn(2+) contacts are provided by Gln-292, Glu-306, and Asn-308. Residues 411 to 558 (VGVDGLDEKS…YEAEHGECEA (148 aa)) form an oligomerization domain region. The tract at residues 559-944 (DPTERKKIMV…ALFKSQLAAG (386 aa)) is carbamoyl phosphate synthetic domain. The region spanning 683–878 (QKLLHDLGLR…LAKVAARCMA (196 aa)) is the ATP-grasp 2 domain. 10 residues coordinate ATP: Arg-719, Arg-758, Leu-760, Glu-765, Gly-790, Val-791, His-792, Ser-793, Gln-833, and Glu-849. Gln-833, Glu-849, and Asn-851 together coordinate Mg(2+). Positions 833, 849, and 851 each coordinate Mn(2+). The region spanning 945-1081 (SRLPEKGTVL…YDLQGLHASL (137 aa)) is the MGS-like domain. Positions 945 to 1081 (SRLPEKGTVL…YDLQGLHASL (137 aa)) are allosteric domain.

Belongs to the CarB family. Composed of two chains; the small (or glutamine) chain promotes the hydrolysis of glutamine to ammonia, which is used by the large (or ammonia) chain to synthesize carbamoyl phosphate. Tetramer of heterodimers (alpha,beta)4. Mg(2+) serves as cofactor. The cofactor is Mn(2+).

It catalyses the reaction hydrogencarbonate + L-glutamine + 2 ATP + H2O = carbamoyl phosphate + L-glutamate + 2 ADP + phosphate + 2 H(+). The enzyme catalyses hydrogencarbonate + NH4(+) + 2 ATP = carbamoyl phosphate + 2 ADP + phosphate + 2 H(+). The protein operates within amino-acid biosynthesis; L-arginine biosynthesis; carbamoyl phosphate from bicarbonate: step 1/1. Its pathway is pyrimidine metabolism; UMP biosynthesis via de novo pathway; (S)-dihydroorotate from bicarbonate: step 1/3. Functionally, large subunit of the glutamine-dependent carbamoyl phosphate synthetase (CPSase). CPSase catalyzes the formation of carbamoyl phosphate from the ammonia moiety of glutamine, carbonate, and phosphate donated by ATP, constituting the first step of 2 biosynthetic pathways, one leading to arginine and/or urea and the other to pyrimidine nucleotides. The large subunit (synthetase) binds the substrates ammonia (free or transferred from glutamine from the small subunit), hydrogencarbonate and ATP and carries out an ATP-coupled ligase reaction, activating hydrogencarbonate by forming carboxy phosphate which reacts with ammonia to form carbamoyl phosphate. In Ralstonia nicotianae (strain ATCC BAA-1114 / GMI1000) (Ralstonia solanacearum), this protein is Carbamoyl phosphate synthase large chain.